Reading from the N-terminus, the 208-residue chain is Uridine kinase (208 aa).

Gly11–Ser18 is a binding site for ATP.

This sequence belongs to the uridine kinase family.

It localises to the cytoplasm. The catalysed reaction is uridine + ATP = UMP + ADP + H(+). It carries out the reaction cytidine + ATP = CMP + ADP + H(+). It functions in the pathway pyrimidine metabolism; CTP biosynthesis via salvage pathway; CTP from cytidine: step 1/3. It participates in pyrimidine metabolism; UMP biosynthesis via salvage pathway; UMP from uridine: step 1/1. The sequence is that of Uridine kinase from Clostridium perfringens (strain SM101 / Type A).